The chain runs to 277 residues: Collectin-10 (277 aa).

The signal sequence occupies residues 1-27; the sequence is MNGFRVLLRSNLSMLLLLALLHFQSLG. Asn11 carries N-linked (GlcNAc...) asparagine glycosylation. The disordered stretch occupies residues 41 to 103; the sequence is THTISPGPKG…IGKKGDKGEK (63 aa). Residues 45–103 form the Collagen-like domain; sequence SPGPKGDDGERGDTGEEGKDGKVGRQGPKGVKGELGDMGAQGNIGKSGPIGKKGDKGEK. A compositionally biased stretch (basic and acidic residues) spans 49–67; it reads KGDDGERGDTGEEGKDGKV. In terms of domain architecture, C-type lectin spans 155–271; that stretch reads TEEKFYYIVQ…CHLTMYFVCE (117 aa). 2 cysteine pairs are disulfide-bonded: Cys176/Cys270 and Cys248/Cys262. Asn258 carries an N-linked (GlcNAc...) asparagine glycan.

This sequence belongs to the COLEC10/COLEC11 family. As to expression, expressed mainly in the liver and stomach, but also in muscles, testes, and intestines.

Its subcellular location is the secreted. The protein resides in the golgi apparatus. The protein localises to the cytoplasm. Lectin that binds to various sugars: galactose &gt; mannose = fucose &gt; N-acetylglucosamine &gt; N-acetylgalactosamine. Acts as a chemoattractant, probably involved in the regulation of cell migration. This is Collectin-10 (Colec10) from Mus musculus (Mouse).